Consider the following 118-residue polypeptide: Holo-[acyl-carrier-protein] synthase (118 aa).

Mg(2+)-binding residues include Asp8 and Glu57.

The protein belongs to the P-Pant transferase superfamily. AcpS family. The cofactor is Mg(2+).

The protein resides in the cytoplasm. The catalysed reaction is apo-[ACP] + CoA = holo-[ACP] + adenosine 3',5'-bisphosphate + H(+). Transfers the 4'-phosphopantetheine moiety from coenzyme A to a Ser of acyl-carrier-protein. The protein is Holo-[acyl-carrier-protein] synthase of Acholeplasma laidlawii (strain PG-8A).